The primary structure comprises 206 residues: Large ribosomal subunit protein uL4 (206 aa).

This sequence belongs to the universal ribosomal protein uL4 family. As to quaternary structure, part of the 50S ribosomal subunit.

Its function is as follows. One of the primary rRNA binding proteins, this protein initially binds near the 5'-end of the 23S rRNA. It is important during the early stages of 50S assembly. It makes multiple contacts with different domains of the 23S rRNA in the assembled 50S subunit and ribosome. Forms part of the polypeptide exit tunnel. The sequence is that of Large ribosomal subunit protein uL4 from Methylobacterium radiotolerans (strain ATCC 27329 / DSM 1819 / JCM 2831 / NBRC 15690 / NCIMB 10815 / 0-1).